A 502-amino-acid polypeptide reads, in one-letter code: Regulator of hypoxia-inducible factor 1 (502 aa).

A run of 11 helical transmembrane segments spans residues 54 to 74 (LLAWMTLVVIGTLAPVSVFSC), 92 to 112 (LDVLDIFRFVAILWVMLNHTG), 138 to 158 (IFGALMGNSALGVEIFLVLSG), 188 to 208 (LAPSMFIFVYIAAGPIMNALL), 241 to 261 (MGYLWYLGLDMQLYMVAPIFL), 272 to 292 (MALTITTIIASMVIRAGYCTA), 335 to 355 (GPFLIGLLLGYITVSSKYIMV), 367 to 387 (LIVAIATIYAILPEYWNPNAG), 396 to 416 (TAVFRSVFAMAISGMIAALYF), 437 to 457 (AYLLHMPVVYIFNWLPFLQAA), and 465 to 485 (LVLPFVAILSFIAALIFYLFI).

In terms of tissue distribution, expressed in intestine, some sensory neurons in the head, body wall muscles and socket cells.

Its subcellular location is the endoplasmic reticulum membrane. Involved in the response to variation in environmental oxygen levels by inhibiting hif-1-mediated gene transcription in a vhl-1-independent manner. Plays a role in susceptibility to killing mediated by P.aeruginosa and by pore-forming toxins produced by B.thuringiensis. Probably by preventing hif-1 transcriptional activity, regulates behavioral responses, such as locomotion speed following acute reoxygenation. Plays a role in normal egg-laying probably by regulating spermatogenesis and in body morphogenesis. In Caenorhabditis elegans, this protein is Regulator of hypoxia-inducible factor 1.